The primary structure comprises 865 residues: Protein translocase subunit SecA (865 aa).

Residues glutamine 93, 111–115 (GEGKT), and aspartate 501 each bind ATP. Zn(2+) is bound by residues cysteine 841, cysteine 843, cysteine 852, and cysteine 853.

It belongs to the SecA family. In terms of assembly, monomer and homodimer. Part of the essential Sec protein translocation apparatus which comprises SecA, SecYEG and auxiliary proteins SecDF-YajC and YidC. Requires Zn(2+) as cofactor.

The protein resides in the cell inner membrane. It is found in the cytoplasm. The catalysed reaction is ATP + H2O + cellular proteinSide 1 = ADP + phosphate + cellular proteinSide 2.. Functionally, part of the Sec protein translocase complex. Interacts with the SecYEG preprotein conducting channel. Has a central role in coupling the hydrolysis of ATP to the transfer of proteins into and across the cell membrane, serving as an ATP-driven molecular motor driving the stepwise translocation of polypeptide chains across the membrane. This Helicobacter pylori (strain P12) protein is Protein translocase subunit SecA.